A 300-amino-acid chain; its full sequence is ETS homologous factor (300 aa).

In terms of domain architecture, PNT spans 29 to 115 (STCNVSSGFF…SNLQHLKWNG (87 aa)). Residues 183 to 202 (ESPDMKKEQDPPAKCHTKKH) form a disordered region. Over residues 185 to 195 (PDMKKEQDPPA) the composition is skewed to basic and acidic residues. The segment at residues 207-289 (THLWEFIRDI…DGRRLVYKFG (83 aa)) is a DNA-binding region (ETS).

It belongs to the ETS family.

The protein resides in the nucleus. Its function is as follows. Transcriptional activator that may play a role in regulating epithelial cell differentiation and proliferation. May act as a repressor for a specific subset of ETS/AP-1-responsive genes, and as a modulator of the nuclear response to mitogen-activated protein kinase signaling cascades. Binds to DNA sequences containing the consensus nucleotide core sequence GGAA. Involved in regulation of TNFRSF10B/DR5 expression through Ets-binding sequences on the TNFRSF10B/DR5 promoter. This chain is ETS homologous factor (EHF), found in Pan paniscus (Pygmy chimpanzee).